A 218-amino-acid chain; its full sequence is Thiopurine S-methyltransferase (218 aa).

S-adenosyl-L-methionine is bound by residues Trp-10, Leu-45, Glu-66, and Arg-123.

It belongs to the class I-like SAM-binding methyltransferase superfamily. TPMT family.

It localises to the cytoplasm. The enzyme catalyses S-adenosyl-L-methionine + a thiopurine = S-adenosyl-L-homocysteine + a thiopurine S-methylether.. The protein is Thiopurine S-methyltransferase of Shewanella amazonensis (strain ATCC BAA-1098 / SB2B).